The following is a 250-amino-acid chain: Mycofactocin precursor peptide peptidase (250 aa).

The a divalent metal cation site is built by Glu38, His40, Asp49, His127, and Glu166.

Belongs to the creatininase superfamily. Homooctamer. The cofactor is Fe(2+). Zn(2+) serves as cofactor.

The catalysed reaction is [mycofactocin precursor peptide]-C-terminal glycyl-N-{5-[(4-hydroxyphenyl)methyl]-4,4-dimethyl-2-oxopyrrolidin-3-yl}acetamide + H2O = [mycofactocin precursor peptide]-C-terminal glycine + 3-amino-5-[(4-hydroxyphenyl)methyl]-4,4-dimethyl-2-pyrrolidin-2-one. In terms of biological role, peptidase involved in the biosynthesis of the enzyme cofactor mycofactocin (MFT). Catalyzes cleavage of the MftC-modified MftA peptide to liberate its final two residues, which consist of a cross-linked valine-decarboxylated tyrosine dipeptide (named 3-amino-5-[(4-hydroxyphenyl)methyl]-4,4-dimethyl-2-pyrrolidin-2-one or ADHP). In Mycobacterium ulcerans (strain Agy99), this protein is Mycofactocin precursor peptide peptidase.